Consider the following 374-residue polypeptide: Anhydro-N-acetylmuramic acid kinase (374 aa).

12-19 contacts ATP; it reads GTSLDGVD.

It belongs to the anhydro-N-acetylmuramic acid kinase family.

The enzyme catalyses 1,6-anhydro-N-acetyl-beta-muramate + ATP + H2O = N-acetyl-D-muramate 6-phosphate + ADP + H(+). The protein operates within amino-sugar metabolism; 1,6-anhydro-N-acetylmuramate degradation. It participates in cell wall biogenesis; peptidoglycan recycling. Functionally, catalyzes the specific phosphorylation of 1,6-anhydro-N-acetylmuramic acid (anhMurNAc) with the simultaneous cleavage of the 1,6-anhydro ring, generating MurNAc-6-P. Is required for the utilization of anhMurNAc either imported from the medium or derived from its own cell wall murein, and thus plays a role in cell wall recycling. This is Anhydro-N-acetylmuramic acid kinase from Salmonella arizonae (strain ATCC BAA-731 / CDC346-86 / RSK2980).